Here is a 128-residue protein sequence, read N- to C-terminus: Fluoride-specific ion channel FluC (128 aa).

A run of 4 helical transmembrane segments spans residues L7–R29, P36–I57, A65–E94, and Y98–L126. Position 43 (N43) interacts with fluoride. Na(+) contacts are provided by G77 and T80. Residues Y104, S108, and S112 each coordinate fluoride.

It belongs to the fluoride channel Fluc/FEX (TC 1.A.43) family. Homodimer.

Its subcellular location is the cell inner membrane. It catalyses the reaction fluoride(in) = fluoride(out). With respect to regulation, na(+) is not transported, but it plays an essential structural role and its presence is essential for fluoride channel function. The Na(+)-binding site is specific for Na(+) over most other cations including K(+) and Mg(2+). Fluoride efflux is inhibited by Li(2+). Its function is as follows. Fluoride-specific ion channel. Important for reducing fluoride concentration in the cell, thus reducing its toxicity. Is highly specific for fluoride ions and cannot transport chloride ions. The protein is Fluoride-specific ion channel FluC of Bordetella pertussis (strain Tohama I / ATCC BAA-589 / NCTC 13251).